A 609-amino-acid polypeptide reads, in one-letter code: MCVGIECHGFGDKPAWMDRGARQKAEAAKMKQKVTQVARNRRMNQFRDQNESSLNRIHNRRTSNSQPSTRSINNTTTIPASNNEPLALSQPPSASSQNQVEKDQLSTYHQDSINVAIDPLDTIDSSLPDFQTVFDEINFLTDQTFDLPEIDWTSTNNVPITDNTANMGVTNGLRAGQYVPRSQKQIDMDFSPRDSPSMLTISDVEDAALLAYYVSKVFHWQFRFCSSTMSGFNQGYFIWLMSKSRPLYLASLALSSSYRSFQNNAKEPQPCLKYEEHMQRYDIATEELQGHLKGHTPMNDVTMLACIVSFISSSFLHSGRIDGNVHLKAGVSLIAPRISRQQSGTLSDVHKTPEESSRDFLTGSIIRFDILSAITRDTVPSLSDSYRRILRSSSPSILLETVSGCQNWVFDILLDVYALRDWKRNTRAVGLLSLWELTAKANMIKSDLERRITSNLMLMNESKQEVKTQEDENLQSRHYKHEICVVTHTFACAVSILLEVIVSGAYPQVPEIKQKVGRALESFAYIEDPDILEVLTWPLFVVGCVVEEDHHECFRQLLSSTQLVRSIGLYGLKEILEKCWKSRETGEIKDESFDFSHFHTYKSREILIA.

Residues Met1 to Cys7 constitute a DNA-binding region (zn(2)-C6 fungal-type). Residues Phe46–Gln104 are disordered. The segment covering Glu51–Glu84 has biased composition (polar residues). Low complexity predominate over residues Pro85–Gln97.

The protein belongs to the TRI10 transcription regulator family.

Its subcellular location is the nucleus. Transcription factor; part of the gene cluster that mediates the biosynthesis of meroterpenoids. The sequence is that of Transcription factor ntnD from Nectria sp.